Consider the following 224-residue polypeptide: Holliday junction branch migration complex subunit RuvA (224 aa).

The domain I stretch occupies residues methionine 1–proline 64. The domain II stretch occupies residues threonine 65–glutamate 143. The segment at alanine 144–proline 171 is flexible linker. Positions serine 172–glycine 224 are domain III.

This sequence belongs to the RuvA family. In terms of assembly, homotetramer. Forms an RuvA(8)-RuvB(12)-Holliday junction (HJ) complex. HJ DNA is sandwiched between 2 RuvA tetramers; dsDNA enters through RuvA and exits via RuvB. An RuvB hexamer assembles on each DNA strand where it exits the tetramer. Each RuvB hexamer is contacted by two RuvA subunits (via domain III) on 2 adjacent RuvB subunits; this complex drives branch migration. In the full resolvosome a probable DNA-RuvA(4)-RuvB(12)-RuvC(2) complex forms which resolves the HJ.

The protein localises to the cytoplasm. Functionally, the RuvA-RuvB-RuvC complex processes Holliday junction (HJ) DNA during genetic recombination and DNA repair, while the RuvA-RuvB complex plays an important role in the rescue of blocked DNA replication forks via replication fork reversal (RFR). RuvA specifically binds to HJ cruciform DNA, conferring on it an open structure. The RuvB hexamer acts as an ATP-dependent pump, pulling dsDNA into and through the RuvAB complex. HJ branch migration allows RuvC to scan DNA until it finds its consensus sequence, where it cleaves and resolves the cruciform DNA. The chain is Holliday junction branch migration complex subunit RuvA from Dinoroseobacter shibae (strain DSM 16493 / NCIMB 14021 / DFL 12).